The following is an 857-amino-acid chain: Facilitated trehalose transporter Tret1-1 (857 aa).

Disordered regions lie at residues 1–28 and 62–203; these read MSGRDSRGAGGGGGGHQPLSNAMGKLKE and DPFL…KATS. The Cytoplasmic segment spans residues 1 to 392; it reads MSGRDSRGAG…VYRPTTNPIY (392 aa). Polar residues predominate over residues 69–81; sequence VSPQRHPQNTVRT. Positions 134 to 143 are enriched in basic and acidic residues; the sequence is EIREHRDRQQ. The segment covering 171–181 has biased composition (polar residues); it reads GNSNTNSNKAA. Phosphoserine is present on residues serine 248, serine 249, serine 250, serine 320, and serine 322. Residues 327-346 are disordered; it reads LTSRQHFQQQRSISTDSRKS. Residues 330 to 341 are compositionally biased toward polar residues; the sequence is RQHFQQQRSIST. The chain crosses the membrane as a helical span at residues 393–413; sequence IWTQVLAALSVSLGSLVVGFV. Topologically, residues 414–440 are extracellular; the sequence is SAYTSPALVSMTDRNITSFEVTQDAGS. Asparagine 428 carries an N-linked (GlcNAc...) asparagine glycan. The chain crosses the membrane as a helical span at residues 441 to 461; the sequence is WVGGIMPLAGLAGGIAGGPLI. At 462–473 the chain is on the cytoplasmic side; the sequence is EYLGRRNTILAT. Residues 474 to 494 traverse the membrane as a helical segment; it reads AVPFIVSSLLIACAVNVAMVL. Residues 495-497 are Extracellular-facing; it reads CGR. The helical transmembrane segment at 498-518 threads the bilayer; sequence FLAGFCVGIASLSLPVYLGET. The Cytoplasmic portion of the chain corresponds to 519–528; it reads VQPEVRGTLG. The chain crosses the membrane as a helical span at residues 529 to 549; that stretch reads LLPTAFGNIGILLCFVAGSFM. The N-linked (GlcNAc...) asparagine glycan is linked to asparagine 550. The Extracellular segment spans residues 550–552; sequence NWS. A helical transmembrane segment spans residues 553–573; the sequence is MLAFLGAALPVPFLILMFLIP. The Cytoplasmic portion of the chain corresponds to 574 to 636; it reads ETPRWFVGRG…ELFKRINLKP (63 aa). A helical transmembrane segment spans residues 637-657; sequence LSISLGLMFFQQFSGINAVIF. The Extracellular portion of the chain corresponds to 658–673; that stretch reads YTVQIFKDAGSTIDSN. The helical transmembrane segment at 674–694 threads the bilayer; sequence LCTIIVGIVNFFATFMGILLI. Residues 695 to 700 lie on the Cytoplasmic side of the membrane; it reads DRLGRK. The chain crosses the membrane as a helical span at residues 701-721; it reads ILLYISDIAMILTLSILGGFF. Topologically, residues 722-740 are extracellular; sequence YCKAHGPDVSHLGWLPLTC. The chain crosses the membrane as a helical span at residues 741 to 761; it reads FVIYILGFSLGFGPIPWLMMG. Residues 762-770 are Cytoplasmic-facing; sequence EILPAKIRG. The helical transmembrane segment at 771–791 threads the bilayer; it reads PAASVVTAFNWFCTFVVTKTF. The Extracellular segment spans residues 792 to 801; sequence QDLTGAMGAH. The helical transmembrane segment at 802 to 822 threads the bilayer; it reads GAFWLFGAICFVGLFFVIIYV. Topologically, residues 823–857 are cytoplasmic; sequence PETQGKTLEDIERKMMGRVRRMSSVANIKPLSFNM. Residues serine 845 and serine 846 each carry the phosphoserine modification.

The protein belongs to the major facilitator superfamily. Sugar transporter (TC 2.A.1.1) family. Trehalose transporter subfamily.

The protein localises to the cell membrane. In terms of biological role, low-capacity facilitative transporter for trehalose. Does not transport maltose, sucrose or lactose. Mediates the bidirectional transfer of trehalose. Responsible for the transport of trehalose synthesized in the fat body and the incorporation of trehalose into other tissues that require a carbon source, thereby regulating trehalose levels in the hemolymph. The polypeptide is Facilitated trehalose transporter Tret1-1 (Drosophila simulans (Fruit fly)).